We begin with the raw amino-acid sequence, 409 residues long: MTSPQTHVIVIGAGITGLLTCQGLKKAGISYSCFERDTSLNSRSNEWTMAIHWSLPLLAEILPTEVRAKLATIACNPVAGIHSGLYPIIHGETGDLITGVPYKDGLRVPRSKMRALCAEGIDVQYGKTLADVAFNESGNGVVATFTDGTLVAGTMIVGADGPRSRVRETAMGDAKLAATTSFPIFHTNMTVCYNDAEKAKFVREKYPTSYLALSERSFHAFQSISSMPDGPDHPETWVFHMAMAWMGQSDNAMCYAERLALVKSKAEGLGEPARSAFMWMPEETEVHKADISYWISQPWNNRDGRLTLVGDAAHPMPPYRGQGLNHCICDVSKLLAGLAGVHSGSTTLSDAIQEFEAEMIPRGKEEVTCSVENGKMLHDWNKIQESPVFKRGFLPMDGHDTRKEIAQAS.

FAD contacts are provided by E35, A50, R110, and D311.

It belongs to the paxM FAD-dependent monooxygenase family. The cofactor is FAD.

It carries out the reaction 3,6,7,9-tetrahydroxy-3-methyl-2,3-dihydro-1H-naphtho[2,1-b]pyran-1-one + NADPH + O2 + H(+) = 2,3,4,7,9-pentahydroxy-6-methyl-1H-phenalen-1-one + NADP(+) + 2 H2O. It functions in the pathway secondary metabolite biosynthesis. In terms of biological role, FAD-dependent monooxygenase; part of the gene cluster that mediates the biosynthesis of phenalenones such as herqueinone, compounds that have been reported to treat tumors, bacterial infections and/or mycoses, and rheumatic diseases. The non-reducing polyketide synthase phnA synthesizes the heptaketide backbone and cyclizes it into the angular, hemiketal-containing naphtho-gamma-pyrone prephenalenone. The product template (PT) domain of phnA catalyzes only the C4-C9 aldol condensation, which is unprecedented among known PT domains. The transformation of prephenalenone to phenalenones requires an FAD-dependent monooxygenase phnB, which catalyzes the C2 aromatic hydroxylation of prephenalenone and ring opening of the gamma-pyrone ring simultaneously. Subsequent intramolecular deprotonation of C3 phenolic oxygen accelerates phenalenone ring closure to yield the tricyclic phenalenone core with a C2 hydroxylation. The prenyltransferase phnF further catalyzes reverse C-prenylation of phenalenone by direct electrophilic substitution at C6, or possibly via first a forward O-prenylation of a neighboring phenol in phenalenone, followed by a Claisen rearrangement. The hydroalkoxylation enzyme phnH catalyzes the 5-exo-trig cyclization via acid catalysis after the spontaneous deprotonation of 7-OH, which leads to the formation of the dihydrobenzofuran atrovenetin. Atrovenetin is further converted to deoxyherqueinone by the O-methyltransferase phnC which can methylate C2-OH to stabilize the northern portion of the phenalenone core. Finally, the oxidoreductase phnG converts deoxyherqueinone to herqueinone via C6 hydroxylation. The polypeptide is FAD-dependent monooxygenase phnB (Penicillium herquei).